The chain runs to 482 residues: tRNA sulfurtransferase (482 aa).

The THUMP domain maps to 61-165 (LAIRDALTRI…DDRLLLIKGR (105 aa)). ATP contacts are provided by residues 183 to 184 (LI), Lys265, Gly287, and Gln296. A disulfide bridge connects residues Cys344 and Cys456. Residues 404-482 (FGPNDVILDI…GFNNVKVYRP (79 aa)) enclose the Rhodanese domain. The active-site Cysteine persulfide intermediate is the Cys456.

This sequence belongs to the ThiI family.

It is found in the cytoplasm. It catalyses the reaction [ThiI sulfur-carrier protein]-S-sulfanyl-L-cysteine + a uridine in tRNA + 2 reduced [2Fe-2S]-[ferredoxin] + ATP + H(+) = [ThiI sulfur-carrier protein]-L-cysteine + a 4-thiouridine in tRNA + 2 oxidized [2Fe-2S]-[ferredoxin] + AMP + diphosphate. The enzyme catalyses [ThiS sulfur-carrier protein]-C-terminal Gly-Gly-AMP + S-sulfanyl-L-cysteinyl-[cysteine desulfurase] + AH2 = [ThiS sulfur-carrier protein]-C-terminal-Gly-aminoethanethioate + L-cysteinyl-[cysteine desulfurase] + A + AMP + 2 H(+). The protein operates within cofactor biosynthesis; thiamine diphosphate biosynthesis. Functionally, catalyzes the ATP-dependent transfer of a sulfur to tRNA to produce 4-thiouridine in position 8 of tRNAs, which functions as a near-UV photosensor. Also catalyzes the transfer of sulfur to the sulfur carrier protein ThiS, forming ThiS-thiocarboxylate. This is a step in the synthesis of thiazole, in the thiamine biosynthesis pathway. The sulfur is donated as persulfide by IscS. The chain is tRNA sulfurtransferase from Escherichia coli (strain K12 / MC4100 / BW2952).